Here is a 403-residue protein sequence, read N- to C-terminus: Phosphoglycerate kinase (403 aa).

Substrate-binding positions include 21-23, Arg36, 59-62, Arg119, and Arg154; these read DFN and HLGR. ATP-binding positions include Lys207, Gly299, Glu330, and 357-360; that span reads GGDA.

This sequence belongs to the phosphoglycerate kinase family. Monomer.

It localises to the cytoplasm. The catalysed reaction is (2R)-3-phosphoglycerate + ATP = (2R)-3-phospho-glyceroyl phosphate + ADP. Its pathway is carbohydrate degradation; glycolysis; pyruvate from D-glyceraldehyde 3-phosphate: step 2/5. The chain is Phosphoglycerate kinase from Chlamydia caviae (strain ATCC VR-813 / DSM 19441 / 03DC25 / GPIC) (Chlamydophila caviae).